The chain runs to 276 residues: NAD kinase (276 aa).

The active-site Proton acceptor is Asp66. NAD(+) contacts are provided by residues 66–67 (DG), 139–140 (ND), Asp168, 179–184 (TAYNIS), and Gln234.

The protein belongs to the NAD kinase family. It depends on a divalent metal cation as a cofactor.

The protein localises to the cytoplasm. It carries out the reaction NAD(+) + ATP = ADP + NADP(+) + H(+). Involved in the regulation of the intracellular balance of NAD and NADP, and is a key enzyme in the biosynthesis of NADP. Catalyzes specifically the phosphorylation on 2'-hydroxyl of the adenosine moiety of NAD to yield NADP. The polypeptide is NAD kinase (Campylobacter lari (strain RM2100 / D67 / ATCC BAA-1060)).